Consider the following 502-residue polypeptide: L-amino-acid oxidase BmooLAAO-I (502 aa).

Positions Met1 to Cys18 are cleaved as a signal peptide. A disulfide bond links Cys28 and Cys191. FAD contacts are provided by residues Met61–Ser62, Glu81–Ala82, Arg89, and Gly105–Arg108. Position 108 (Arg108) interacts with substrate. N-linked (GlcNAc...) asparagine glycosylation occurs at Asn190. Residue His241 participates in substrate binding. FAD is bound at residue Val279. Cys349 and Cys430 are disulfide-bonded. Tyr390 lines the substrate pocket. Residues Glu475 and Gly482–Thr487 contribute to the FAD site. Position 482–483 (Gly482–Trp483) interacts with substrate.

The protein belongs to the flavin monoamine oxidase family. FIG1 subfamily. As to quaternary structure, homodimer; non-covalently linked. Requires FAD as cofactor. In terms of processing, N-glycosylated. The enzymatic activity is not affected by deglycosylation. Expressed by the venom gland.

The protein localises to the secreted. It carries out the reaction an L-alpha-amino acid + O2 + H2O = a 2-oxocarboxylate + H2O2 + NH4(+). The catalysed reaction is L-leucine + O2 + H2O = 4-methyl-2-oxopentanoate + H2O2 + NH4(+). It catalyses the reaction L-phenylalanine + O2 + H2O = 3-phenylpyruvate + H2O2 + NH4(+). The enzyme catalyses L-tryptophan + O2 + H2O = indole-3-pyruvate + H2O2 + NH4(+). It carries out the reaction L-methionine + O2 + H2O = 4-methylsulfanyl-2-oxobutanoate + H2O2 + NH4(+). The catalysed reaction is L-isoleucine + O2 + H2O = (S)-3-methyl-2-oxopentanoate + H2O2 + NH4(+). It catalyses the reaction L-histidine + O2 + H2O = 3-(imidazol-5-yl)pyruvate + H2O2 + NH4(+). The enzyme catalyses L-tyrosine + O2 + H2O = 3-(4-hydroxyphenyl)pyruvate + H2O2 + NH4(+). It carries out the reaction L-alanine + O2 + H2O = pyruvate + H2O2 + NH4(+). The catalysed reaction is L-valine + O2 + H2O = 3-methyl-2-oxobutanoate + H2O2 + NH4(+). Its activity is regulated as follows. Its enzymatic activities is reduced when it is exposed to Ca(2+), Zn(2+), Al(3+), Cu(2+) or Ni(2+) salts. Functionally, catalyzes an oxidative deamination of predominantly hydrophobic and aromatic L-amino acids, thus producing hydrogen peroxide that may contribute to the toxicity of the venom. Shows very high activity on L-Met, and L-Leu, high activity on L-Ile, L-Phe and L-Tyr and moderate activity on L-His, L-Val and L-Ala. Exhibits diverse biological activities, such as edema, apoptosis of tumor cell lines, antibacterial activities against both Gram-positive and Gram-negative bacteria, as well as induction of platelet aggregation. Effects of snake L-amino oxidases on platelets are controversial, since they either induce aggregation or inhibit agonist-induced aggregation. These different effects are probably due to different experimental conditions. Unlike other snake venom L-amino acid oxidases, does not induce hemorrhage. It may also induce hemolysis. Has parasiticidal activities against and leishmania, as a result of enzyme-catalyzed hydrogen peroxide production. The chain is L-amino-acid oxidase BmooLAAO-I from Bothrops moojeni (Lance-headed viper).